Reading from the N-terminus, the 297-residue chain is Putative F-box protein At2g19630 (297 aa).

The region spanning Thr11 to Arg60 is the F-box domain.

The chain is Putative F-box protein At2g19630 from Arabidopsis thaliana (Mouse-ear cress).